The following is a 227-amino-acid chain: Endolytic peptidoglycan transglycosylase RlpA (227 aa).

Positions 1 to 21 (MMNHKFVLLILLIFYCFFLSG) are cleaved as a signal peptide. The N-palmitoyl cysteine moiety is linked to residue C22. A lipid anchor (S-diacylglycerol cysteine) is attached at C22.

The protein belongs to the RlpA family.

The protein resides in the cell membrane. Functionally, lytic transglycosylase with a strong preference for naked glycan strands that lack stem peptides. The sequence is that of Endolytic peptidoglycan transglycosylase RlpA from Rickettsia bellii (strain RML369-C).